The primary structure comprises 127 residues: Glycine cleavage system H protein 2 (127 aa).

The Lipoyl-binding domain occupies 24-105 (SVTVGISDHA…PYGSWIFKLK (82 aa)). Residue lysine 65 is modified to N6-lipoyllysine.

It belongs to the GcvH family. The glycine cleavage system is composed of four proteins: P, T, L and H. (R)-lipoate is required as a cofactor.

Its function is as follows. The glycine cleavage system catalyzes the degradation of glycine. The H protein shuttles the methylamine group of glycine from the P protein to the T protein. This Pseudomonas putida (strain ATCC 47054 / DSM 6125 / CFBP 8728 / NCIMB 11950 / KT2440) protein is Glycine cleavage system H protein 2.